Here is a 279-residue protein sequence, read N- to C-terminus: MSGTAEFPGRIPAPYLEVGSSSFVELLGSVAPELLPGRRPLPPGDMGDAAPHGTTIVALRCNEGVVMAGDRRATQGNMISLRDIQKVFPADAYSLIGIAGTAGLGVEMIRLFQAELEHFEKLEGNALSLHGKANKLANMIRGNLGIAMQGLAVLPLFAGFDTDAPDAASAGRIFSYDVVGGIYEEREYDAIGSGSIFAKSALKKRFQSEVDATEATRLAIEALYDAADDDSATGGPDLTRKLFPTVFTATADGAKRVPDAEIEAVSRAVVAARLENPGG.

Positions 1–53 (MSGTAEFPGRIPAPYLEVGSSSFVELLGSVAPELLPGRRPLPPGDMGDAAPHG) are cleaved as a propeptide — removed in mature form; by autocatalysis. The Nucleophile role is filled by Thr-54.

This sequence belongs to the peptidase T1B family. As to quaternary structure, the 20S proteasome core is composed of 14 alpha and 14 beta subunits that assemble into four stacked heptameric rings, resulting in a barrel-shaped structure. The two inner rings, each composed of seven catalytic beta subunits, are sandwiched by two outer rings, each composed of seven alpha subunits. The catalytic chamber with the active sites is on the inside of the barrel. Has a gated structure, the ends of the cylinder being occluded by the N-termini of the alpha-subunits. Is capped by the proteasome-associated ATPase, ARC.

It localises to the cytoplasm. It carries out the reaction Cleavage of peptide bonds with very broad specificity.. It participates in protein degradation; proteasomal Pup-dependent pathway. With respect to regulation, the formation of the proteasomal ATPase ARC-20S proteasome complex, likely via the docking of the C-termini of ARC into the intersubunit pockets in the alpha-rings, may trigger opening of the gate for substrate entry. Interconversion between the open-gate and close-gate conformations leads to a dynamic regulation of the 20S proteasome proteolysis activity. In terms of biological role, component of the proteasome core, a large protease complex with broad specificity involved in protein degradation. This is Proteasome subunit beta from Stackebrandtia nassauensis (strain DSM 44728 / CIP 108903 / NRRL B-16338 / NBRC 102104 / LLR-40K-21).